We begin with the raw amino-acid sequence, 1553 residues long: Dual oxidase 1 (1553 aa).

The signal sequence occupies residues 1–21; sequence MGFRLALAWTLLVGPWMPMGA. At 22–596 the chain is on the extracellular side; sequence RNSISWEVQR…YFKGSGFGFG (575 aa). The interval 26–593 is peroxidase-like; mediates peroxidase activity; the sequence is SWEVQRFDGW…MRDYFKGSGF (568 aa). N-linked (GlcNAc...) asparagine glycosylation is found at N94, N342, N354, and N534. Residues 597-617 traverse the membrane as a helical segment; the sequence is VTIGTLCCFPLVSLLSAWIVA. Topologically, residues 618–1046 are cytoplasmic; the sequence is QLRRRNFKRL…KRFVENYRRH (429 aa). 3 consecutive EF-hand domains span residues 815-850, 851-886, and 895-930; these read PQDMFVESMFSLADKDGNGYLSFREFLDILVVFMKG, SPEEKSRLMFRMYDFDGNGLISKDEFIRMLRSFIEI, and QLTEVVESMFREAGFQDKQELTWEDFHFMLRDHDSE. Ca(2+) contacts are provided by D828, D830, N832, Y834, E839, D864, D866, N868, and E875. The interaction with TXNDC11 stretch occupies residues 956–1250; that stretch reads YISQEKLCPS…GSFALIQLPR (295 aa). Residues 1047 to 1067 form a helical membrane-spanning segment; the sequence is IGCLAVFYTIAGGLFLERAYY. The Extracellular portion of the chain corresponds to 1068–1082; that stretch reads YAFAAHHMGITDTTR. Residues 1083 to 1103 form a helical membrane-spanning segment; sequence VGIILSRGTAASISFMFSYIL. The 183-residue stretch at 1089–1271 folds into the Ferric oxidoreductase domain; that stretch reads RGTAASISFM…YVGDKLVSLS (183 aa). Residues 1104–1138 are Cytoplasmic-facing; it reads LTMCRNLITFLRETFLNRYVPFDAAVDFHRLIAST. Residues 1139–1159 form a helical membrane-spanning segment; that stretch reads AIILTVLHSAGHVVNVYLFSI. Over 1160–1190 the chain is Extracellular; it reads SPLSVLSCLFPGLFHDNGSEFPQKYYWWFFQ. The chain crosses the membrane as a helical span at residues 1191-1211; that stretch reads TVPGLTGVMLLLILAIMYVFA. The Cytoplasmic segment spans residues 1212–1228; the sequence is SHHFRRCSFRGFWLTHH. A helical transmembrane segment spans residues 1229-1249; sequence LYILLYMLLIIHGSFALIQLP. R1250 is a topological domain (extracellular). The chain crosses the membrane as a helical span at residues 1251–1271; that stretch reads FHIFFLVPALIYVGDKLVSLS. An FAD-binding FR-type domain is found at 1272–1378; the sequence is RKKVEISVVK…DGPFGEGHQE (107 aa). Over 1272–1553 the chain is Cytoplasmic; it reads RKKVEISVVK…THFSHHYENF (282 aa).

This sequence in the N-terminal section; belongs to the peroxidase family. In terms of assembly, interacts with TXNDC11, TPO and CYBA. Post-translationally, N-glycosylated. Specifically expressed in thyroid.

Its subcellular location is the apical cell membrane. It carries out the reaction NADH + O2 + H(+) = H2O2 + NAD(+). It catalyses the reaction NADPH + O2 + H(+) = H2O2 + NADP(+). The protein operates within hormone biosynthesis; thyroid hormone biosynthesis. The NADPH oxidase activity is calcium-dependent. Peroxidase activity is inhibited by aminobenzohydrazide. Its function is as follows. Generates hydrogen peroxide which is required for the activity of thyroid peroxidase/TPO and lactoperoxidase/LPO. Plays a role in thyroid hormones synthesis and lactoperoxidase-mediated antimicrobial defense at the surface of mucosa. May have its own peroxidase activity through its N-terminal peroxidase-like domain. The sequence is that of Dual oxidase 1 (DUOX1) from Sus scrofa (Pig).